The primary structure comprises 181 residues: Ribose 1,5-bisphosphate phosphokinase PhnN (181 aa).

G12 to D19 is an ATP binding site.

It belongs to the ribose 1,5-bisphosphokinase family.

It catalyses the reaction alpha-D-ribose 1,5-bisphosphate + ATP = 5-phospho-alpha-D-ribose 1-diphosphate + ADP. The protein operates within metabolic intermediate biosynthesis; 5-phospho-alpha-D-ribose 1-diphosphate biosynthesis; 5-phospho-alpha-D-ribose 1-diphosphate from D-ribose 5-phosphate (route II): step 3/3. Catalyzes the phosphorylation of ribose 1,5-bisphosphate to 5-phospho-D-ribosyl alpha-1-diphosphate (PRPP). The sequence is that of Ribose 1,5-bisphosphate phosphokinase PhnN from Acidiphilium cryptum (strain JF-5).